The chain runs to 175 residues: Cyclic pyranopterin monophosphate synthase (175 aa).

Substrate contacts are provided by residues 78–80 and 125–126; these read LCH and ME. D140 is an active-site residue.

This sequence belongs to the MoaC family. Homohexamer; trimer of dimers.

The enzyme catalyses (8S)-3',8-cyclo-7,8-dihydroguanosine 5'-triphosphate = cyclic pyranopterin phosphate + diphosphate. It functions in the pathway cofactor biosynthesis; molybdopterin biosynthesis. Catalyzes the conversion of (8S)-3',8-cyclo-7,8-dihydroguanosine 5'-triphosphate to cyclic pyranopterin monophosphate (cPMP). The protein is Cyclic pyranopterin monophosphate synthase of Rhodopirellula baltica (strain DSM 10527 / NCIMB 13988 / SH1).